A 167-amino-acid chain; its full sequence is Probable D-lyxose ketol-isomerase (167 aa).

Residues His69, His71, Glu82, and His137 each coordinate Mn(2+).

Belongs to the D-lyxose ketol-isomerase family. Homodimer. Mn(2+) is required as a cofactor.

It carries out the reaction D-lyxose = D-xylulose. Its function is as follows. Sugar isomerase that catalyzes the reversible isomerization of D-lyxose to D-xylulose. In Bacillus subtilis (strain 168), this protein is Probable D-lyxose ketol-isomerase (ydaE).